A 436-amino-acid polypeptide reads, in one-letter code: MKILQYKSIENVQYSKNILYFCGHSMGLQPKSTKIYINKILNQWKNLGVLSYHYGELPASYCDEQLSIDCAQWIVNAKFNEVSITCNLTVNMHVLIAKFYRPTNEKYCILIENDIFPSDYYVLESHIQWHGYNTNDCFIKLKPRLHEYCLRNDDILPEIIKNQHRIALIWLPGIQYITGQLFNMKLITEWGHQYAKCPVGWDLAHAVGNIPLYLHDWNIDMAVWCSYKYLNGSPGAIGGLFIHEKHHHEEGSYGPKFIEFTNNNNITIFNNINGPQLTGWWSHRSETRFNMTGNMELAKGANAYRLSNPPLLLAAALTVSVNIIKSCGGMINLREKSIKLTDYLEYLITNSSLALKHDHYCLVTPSNSNERGAQLTISVTHMNIQVVYENLLKLGVICDYRLPNFLRITPIPLYNSFEDVYLLAKCLHQVLNDTLN.

Residues Leu88, Thr89, 116–119 (FPSD), Asp202, His205, and Tyr227 each bind pyridoxal 5'-phosphate. Lys228 is modified (N6-(pyridoxal phosphate)lysine). Residues Trp280 and Asn308 each coordinate pyridoxal 5'-phosphate.

The protein belongs to the kynureninase family. Homodimer. It depends on pyridoxal 5'-phosphate as a cofactor.

The protein resides in the cytoplasm. It carries out the reaction L-kynurenine + H2O = anthranilate + L-alanine + H(+). The catalysed reaction is 3-hydroxy-L-kynurenine + H2O = 3-hydroxyanthranilate + L-alanine + H(+). The protein operates within amino-acid degradation; L-kynurenine degradation; L-alanine and anthranilate from L-kynurenine: step 1/1. Its pathway is cofactor biosynthesis; NAD(+) biosynthesis; quinolinate from L-kynurenine: step 2/3. Functionally, catalyzes the cleavage of L-kynurenine (L-Kyn) and L-3-hydroxykynurenine (L-3OHKyn) into anthranilic acid (AA) and 3-hydroxyanthranilic acid (3-OHAA), respectively. The polypeptide is Kynureninase (Schistosoma japonicum (Blood fluke)).